The following is a 128-amino-acid chain: Fluoride-specific ion channel FluC (128 aa).

The next 4 membrane-spanning stretches (helical) occupy residues 7-27 (AVLL…LIAV), 34-54 (TGFP…IGMI), 70-90 (LLLA…MYEI), and 104-124 (LYLI…MALA). Na(+) contacts are provided by glycine 78 and threonine 81.

Belongs to the fluoride channel Fluc/FEX (TC 1.A.43) family.

It is found in the cell inner membrane. It catalyses the reaction fluoride(in) = fluoride(out). Its activity is regulated as follows. Na(+) is not transported, but it plays an essential structural role and its presence is essential for fluoride channel function. Fluoride-specific ion channel. Important for reducing fluoride concentration in the cell, thus reducing its toxicity. The protein is Fluoride-specific ion channel FluC of Prosthecochloris aestuarii (strain DSM 271 / SK 413).